An 80-amino-acid chain; its full sequence is U6 snRNA-associated Sm-like protein LSm6 (80 aa).

The Sm domain maps to 7 to 79; that stretch reads TPSDFLKQII…VLYISTQKRR (73 aa). At Lys59 the chain carries N6-acetyllysine.

This sequence belongs to the snRNP Sm proteins family. SmF/LSm6 subfamily. Component of the precatalytic spliceosome (spliceosome B complex). Component of the U4/U6-U5 tri-snRNP complex, a building block of the precatalytic spliceosome (spliceosome B complex). The U4/U6-U5 tri-snRNP complex is composed of the U4, U6 and U5 snRNAs and at least PRPF3, PRPF4, PRPF6, PRPF8, PRPF31, SNRNP200, TXNL4A, SNRNP40, SNRPB, SNRPD1, SNRPD2, SNRPD3, SNRPE, SNRPF, SNRPG, DDX23, CD2BP2, PPIH, SNU13, EFTUD2, SART1 and USP39, plus LSM2, LSM3, LSM4, LSM5, LSM6, LSM7 and LSM8. LSM2, LSM3, LSM4, LSM5, LSM6, LSM7 and LSM8 form a heptameric, ring-shaped subcomplex (the LSM2-8 complex) that is part of the U4/U6-U5 tri-snRNP complex and the precatalytic spliceosome. Component of the heptameric LSM1-LSM7 complex, which consists of LSM1, LSM2, LSM3, LSM4, LSM5, LSM6 and LSM7.

It is found in the cytoplasm. The protein resides in the nucleus. In terms of biological role, plays a role in pre-mRNA splicing as component of the U4/U6-U5 tri-snRNP complex that is involved in spliceosome assembly, and as component of the precatalytic spliceosome (spliceosome B complex). The heptameric LSM2-8 complex binds specifically to the 3'-terminal U-tract of U6 snRNA. Component of LSm protein complexes, which are involved in RNA processing and may function in a chaperone-like manner, facilitating the efficient association of RNA processing factors with their substrates. Component of the cytoplasmic LSM1-LSM7 complex, which is thought to be involved in mRNA degradation by activating the decapping step in the 5'-to-3' mRNA decay pathway. This Homo sapiens (Human) protein is U6 snRNA-associated Sm-like protein LSm6 (LSM6).